An 888-amino-acid polypeptide reads, in one-letter code: Prodigiosin synthesizing transferase PigC (888 aa).

The protein belongs to the PigC family.

Its pathway is antibiotic biosynthesis; prodigiosin biosynthesis. Its function is as follows. Involved in the biosynthesis of 2-methyl-3-n-amyl-pyrrole (MAP), one of the terminal products involved in the biosynthesis of the red antibiotic prodigiosin (Pig). Catalyzes the transfer of 2-methyl-3-n-amyl-pyrrole (MAP) to 4-methoxy-2,2'-bipyrrole-5-carbaldehyde (MBC) to yield prodigiosin. It is able to use substrates with a variety of monocyclic rings in place of the pyrrolic ring A of its natural substrate. This chain is Prodigiosin synthesizing transferase PigC, found in Serratia marcescens.